A 313-amino-acid chain; its full sequence is Homoserine O-succinyltransferase (313 aa).

Cysteine 142 acts as the Acyl-thioester intermediate in catalysis. Positions 163 and 192 each coordinate substrate. Catalysis depends on histidine 235, which acts as the Proton acceptor. Glutamate 237 is an active-site residue. Residue arginine 249 coordinates substrate.

This sequence belongs to the MetA family.

Its subcellular location is the cytoplasm. It catalyses the reaction L-homoserine + succinyl-CoA = O-succinyl-L-homoserine + CoA. It participates in amino-acid biosynthesis; L-methionine biosynthesis via de novo pathway; O-succinyl-L-homoserine from L-homoserine: step 1/1. Transfers a succinyl group from succinyl-CoA to L-homoserine, forming succinyl-L-homoserine. This chain is Homoserine O-succinyltransferase, found in Shewanella baltica (strain OS195).